We begin with the raw amino-acid sequence, 78 residues long: MRYQTVFWILLIALCTVNPAKIQDVASYGGTVRLTDSGRAKCSRKTWPCETSEDCCDKNCSDTFWTCQLGYGCSRVCV.

The signal sequence occupies residues 1 to 19 (MRYQTVFWILLIALCTVNP). 4 cysteine pairs are disulfide-bonded: C42-C56, C49-C60, C55-C77, and C67-C73.

This sequence belongs to the neurotoxin 13 (insecticidal toxin ABC) family. 03 (JZTX-59) subfamily. As to expression, expressed by the venom gland.

The protein localises to the secreted. Functionally, probable ion channel inhibitor. The protein is U29-theraphotoxin-Cg1a of Chilobrachys guangxiensis (Chinese earth tiger tarantula).